We begin with the raw amino-acid sequence, 488 residues long: Inosine-5'-monophosphate dehydrogenase (488 aa).

2 consecutive CBS domains span residues 95–153 and 157–213; these read VITN…SIKI and MTKE…PHAA. NAD(+) is bound by residues Asp250 and 300–302; that span reads GIG. The K(+) site is built by Gly302 and Gly304. IMP is bound at residue Ser305. Cys307 is a K(+) binding site. The Thioimidate intermediate role is filled by Cys307. IMP is bound by residues 340–342, 363–364, and 387–391; these read DGG, GS, and YRGMG. Arg403 acts as the Proton acceptor in catalysis. Glu417 provides a ligand contact to IMP. Residues 467–488 form a disordered region; sequence AGLAESHPHNVQITKESPNYSF. Residues Glu471, Ser472, and His473 each contribute to the K(+) site. The span at 475-488 shows a compositional bias: polar residues; the sequence is HNVQITKESPNYSF.

It belongs to the IMPDH/GMPR family. As to quaternary structure, homotetramer. K(+) is required as a cofactor.

It catalyses the reaction IMP + NAD(+) + H2O = XMP + NADH + H(+). It functions in the pathway purine metabolism; XMP biosynthesis via de novo pathway; XMP from IMP: step 1/1. Mycophenolic acid (MPA) is a non-competitive inhibitor that prevents formation of the closed enzyme conformation by binding to the same site as the amobile flap. In contrast, mizoribine monophosphate (MZP) is a competitive inhibitor that induces the closed conformation. MPA is a potent inhibitor of mammalian IMPDHs but a poor inhibitor of the bacterial enzymes. MZP is a more potent inhibitor of bacterial IMPDH. Its function is as follows. Catalyzes the conversion of inosine 5'-phosphate (IMP) to xanthosine 5'-phosphate (XMP), the first committed and rate-limiting step in the de novo synthesis of guanine nucleotides, and therefore plays an important role in the regulation of cell growth. The chain is Inosine-5'-monophosphate dehydrogenase from Staphylococcus haemolyticus (strain JCSC1435).